The chain runs to 290 residues: Phosphoribosylaminoimidazole-succinocarboxamide synthase (290 aa).

The protein belongs to the SAICAR synthetase family.

It catalyses the reaction 5-amino-1-(5-phospho-D-ribosyl)imidazole-4-carboxylate + L-aspartate + ATP = (2S)-2-[5-amino-1-(5-phospho-beta-D-ribosyl)imidazole-4-carboxamido]succinate + ADP + phosphate + 2 H(+). Its pathway is purine metabolism; IMP biosynthesis via de novo pathway; 5-amino-1-(5-phospho-D-ribosyl)imidazole-4-carboxamide from 5-amino-1-(5-phospho-D-ribosyl)imidazole-4-carboxylate: step 1/2. The chain is Phosphoribosylaminoimidazole-succinocarboxamide synthase from Haemophilus influenzae (strain PittEE).